The chain runs to 109 residues: DNA-directed RNA polymerase subunit I (109 aa).

The catalysed reaction is RNA(n) + a ribonucleoside 5'-triphosphate = RNA(n+1) + diphosphate. In terms of biological role, DNA-dependent RNA polymerase catalyzes the transcription of DNA into RNA using the four ribonucleoside triphosphates as substrates. This is DNA-directed RNA polymerase subunit I (rpoI) from Methanocaldococcus jannaschii (strain ATCC 43067 / DSM 2661 / JAL-1 / JCM 10045 / NBRC 100440) (Methanococcus jannaschii).